We begin with the raw amino-acid sequence, 552 residues long: DNA ligase (552 aa).

Glutamate 229 is an ATP binding site. Catalysis depends on lysine 231, which acts as the N6-AMP-lysine intermediate. The ATP site is built by arginine 236 and glutamate 283. 2 residues coordinate Mg(2+): glutamate 283 and glutamate 377. Residues lysine 382 and lysine 397 each contribute to the ATP site.

The protein belongs to the ATP-dependent DNA ligase family. Interacts with host TOP2A and TOP2B. The cofactor is Mg(2+).

It localises to the host cytoplasm. It catalyses the reaction ATP + (deoxyribonucleotide)n-3'-hydroxyl + 5'-phospho-(deoxyribonucleotide)m = (deoxyribonucleotide)n+m + AMP + diphosphate.. Its function is as follows. DNA ligase that seals nicks in double-stranded DNA during DNA replication, DNA recombination and DNA repair. Recruits cellular topoisomerase II to sites of viral replication and assembly. The sequence is that of DNA ligase (OPG180) from Homo sapiens (Human).